A 364-amino-acid chain; its full sequence is Bifunctional protein Rv2228c (364 aa).

The region spanning M1 to A139 is the RNase H type-1 domain. Mg(2+)-binding residues include D8, E49, D73, and D123. The active-site Tele-phosphohistidine intermediate is the H172. E246 functions as the Proton donor/acceptor; for phosphatase activity in the catalytic mechanism.

This sequence in the N-terminal section; belongs to the RNase H family. In the C-terminal section; belongs to the histidine phosphatase superfamily. As to quaternary structure, the N-terminal domain alone is monomeric in solution but associates in the crystal to form a dimer. It depends on Mg(2+) as a cofactor.

The enzyme catalyses Endonucleolytic cleavage to 5'-phosphomonoester.. It carries out the reaction adenosylcob(III)alamin 5'-phosphate + H2O = adenosylcob(III)alamin + phosphate. The catalysed reaction is alpha-ribazole 5'-phosphate + H2O = alpha-ribazole + phosphate. Its pathway is nucleoside biosynthesis; alpha-ribazole biosynthesis; alpha-ribazole from 5,6-dimethylbenzimidazole: step 2/2. Its function is as follows. Endonuclease that displays both RNase H activity with a hybrid RNA/DNA substrate as well as double-stranded RNase activity. As the only authenticated RNase HI in M.tuberculosis, probably plays an important role in the physiology of this organism, being likely involved in bacterial replication. In terms of biological role, catalyzes the hydrolysis of the phospho group from alpha-ribazole 5'-phosphate to form alpha-ribazole. May also catalyze the conversion of adenosylcobalamin 5'-phosphate to adenosylcobalamin (vitamin B12). Has a possible role in B12 recycling, but the primary role of the C-terminal domain of this phosphatase enzyme could be phosphate generation to help bacterial survival within the macrophage, which is a phosphate-deprived environment. This chain is Bifunctional protein Rv2228c, found in Mycobacterium tuberculosis (strain ATCC 25618 / H37Rv).